The sequence spans 334 residues: Aspartate carbamoyltransferase catalytic subunit (334 aa).

Positions 71 and 72 each coordinate carbamoyl phosphate. Lysine 99 is an L-aspartate binding site. Carbamoyl phosphate contacts are provided by arginine 121, histidine 151, and glutamine 154. The L-aspartate site is built by arginine 184 and arginine 239. Residues glycine 280 and proline 281 each coordinate carbamoyl phosphate.

This sequence belongs to the aspartate/ornithine carbamoyltransferase superfamily. ATCase family. Heterododecamer (2C3:3R2) of six catalytic PyrB chains organized as two trimers (C3), and six regulatory PyrI chains organized as three dimers (R2).

It catalyses the reaction carbamoyl phosphate + L-aspartate = N-carbamoyl-L-aspartate + phosphate + H(+). The protein operates within pyrimidine metabolism; UMP biosynthesis via de novo pathway; (S)-dihydroorotate from bicarbonate: step 2/3. Catalyzes the condensation of carbamoyl phosphate and aspartate to form carbamoyl aspartate and inorganic phosphate, the committed step in the de novo pyrimidine nucleotide biosynthesis pathway. The chain is Aspartate carbamoyltransferase catalytic subunit from Pseudomonas putida (strain GB-1).